The following is a 400-amino-acid chain: F-box/LRR-repeat protein 14 (400 aa).

One can recognise an F-box domain in the interval 2-48 (ETHISCLFPELLAMIFGYLDVRDKGRAAQVCTAWRDAAYHKSVWRGV). A required for down-regulation of SNAI1 region spans residues 2-48 (ETHISCLFPELLAMIFGYLDVRDKGRAAQVCTAWRDAAYHKSVWRGV). 5 LRR repeats span residues 144 to 163 (GLEV…GLLL), 170 to 191 (RLKS…GHLA), 203 to 225 (GLEQ…HISR), 229 to 250 (GLRL…LHLS), and 254 to 275 (SLRS…MHLA).

Part of a SCF (SKP1-cullin-F-box) ubiquitin-protein ligase complex. Interacts with SKP1 and CUL1. Interacts with SNAI1; the interaction requires the phosphorylation of the two serine residues in the substrate destruction motif D-S-G-X(2,3,4)-S.

It localises to the cytoplasm. Substrate-recognition component of some SCF (SKP1-CUL1-F-box protein)-type E3 ubiquitin-protein ligase complexes. The SCF(FBXL14) complex acts by mediating ubiquitination and subsequent degradation of SNAI1. This chain is F-box/LRR-repeat protein 14 (FBXL14), found in Bos taurus (Bovine).